The following is a 284-amino-acid chain: Protein-S-isoprenylcysteine O-methyltransferase (284 aa).

The Cytoplasmic portion of the chain corresponds to 1–16 (MAGCAARVPPGSEARL). The chain crosses the membrane as a helical span at residues 17–33 (SLATFLLGASVLALPLL). At 34–41 (TRAGLQGR) the chain is on the lumenal side. A helical transmembrane segment spans residues 42-59 (TGLALYVAGLNALLLLLY). Residues 60–69 (RPPRYQIAIR) are Cytoplasmic-facing. The helical transmembrane segment at 70–87 (ACFLGFVFGCGVLLSFSQ) threads the bilayer. Residues 88–92 (SSWNH) lie on the Lumenal side of the membrane. A helical membrane pass occupies residues 93–112 (FGWYVCSLSLFHYSEYLVTA). Topologically, residues 113–131 (VNNPKSLSLDSFLLNHSLE) are cytoplasmic. A helical transmembrane segment spans residues 132 to 149 (YTVAALSSWIEFTLENIF). Residues 150-154 (WPELK) lie on the Lumenal side of the membrane. The chain crosses the membrane as a helical span at residues 155 to 174 (QITWLSAAGLLMVIFGECLR). Over 175–212 (KVAMFTAGSNFNHVVQSEKSDTHTLVTSGVYAWCRHPS) the chain is Cytoplasmic. Residues Gln-190, 197–200 (HTLV), Tyr-205, and 210–213 (HPSY) contribute to the S-adenosyl-L-methionine site. Residues 213–228 (YVGWFYWSIGTQVMLC) traverse the membrane as a helical segment. Asn-229 is a topological domain (lumenal). A helical membrane pass occupies residues 230–244 (PICGVVYALTVWRFF). Over 245 to 284 (RDRTEEEEISLIHFFGEEYLDYKKRVPTGLPFIKGVKVGL) the chain is Cytoplasmic. Residue Arg-247 participates in substrate binding. An S-adenosyl-L-methionine-binding site is contributed by Glu-251.

It belongs to the class VI-like SAM-binding methyltransferase superfamily. Isoprenylcysteine carboxyl methyltransferase family.

Its subcellular location is the endoplasmic reticulum membrane. The enzyme catalyses [protein]-C-terminal S-[(2E,6E)-farnesyl]-L-cysteine + S-adenosyl-L-methionine = [protein]-C-terminal S-[(2E,6E)-farnesyl]-L-cysteine methyl ester + S-adenosyl-L-homocysteine. Functionally, catalyzes the post-translational methylation of isoprenylated C-terminal cysteine residues. This is Protein-S-isoprenylcysteine O-methyltransferase from Rattus norvegicus (Rat).